The primary structure comprises 622 residues: MSNKDELYTFGIGENFHLQNYLGVHSENESFCFRVWAPNAENVQVIGDFTDWRNRPLQMNKNQAGVWEANSLDAREGDLYKYLVTRKGGQVVEKIDPMAVYMERRPGTASVIKVLRNKKWEDGLWMGRRKRLGFQKRPINIYEVHAGSWKKDDFGHPMTFSQLKDYLIPYLVEMNYTHVEFMPLMAHPLDMSWGYQLMGYFAFEHTYGTPEEFQDFVEACHKNNIGVLVDWVPGHFIQNDDALAYFDGTATYEYQNHDRAHNYRWGALNFDLGKNQVQSFLISSALFWIEHYHIDGIRVDAVSNMLYLDYDEGPWEANQFGDNRNLEGYYFLRKLNKVIKERHPNVMMIAEESTASTPITKDLESGGLGFDFKWNMGWMNDILRFYEEDPLYRQYDFNLVTFSFMYIFNENFVLAFSHDEVVHGKKSMMHKMWGDRYNQFAGLRNLYAYQMCHPGKKLLFMGSEFGQFLEWKYNDQLEWENLNDDMNQKMQRYTKQLNQFYKDHKCLWRIDDSFDGIEIIDADNKSETVLSFIRKDDKGDLLLCVFNMTPVERPNFTIGVPQAGIYEEVLNTEMEEFGGVWKNHNPVTKTQVATWKDYDHTLSFTLPALGASVWRIKRRLRK.

D300 acts as the Nucleophile in catalysis. E351 acts as the Proton donor in catalysis.

It belongs to the glycosyl hydrolase 13 family. GlgB subfamily. Monomer.

The enzyme catalyses Transfers a segment of a (1-&gt;4)-alpha-D-glucan chain to a primary hydroxy group in a similar glucan chain.. It participates in glycan biosynthesis; glycogen biosynthesis. Functionally, catalyzes the formation of the alpha-1,6-glucosidic linkages in glycogen by scission of a 1,4-alpha-linked oligosaccharide from growing alpha-1,4-glucan chains and the subsequent attachment of the oligosaccharide to the alpha-1,6 position. The protein is 1,4-alpha-glucan branching enzyme GlgB of Streptococcus agalactiae serotype III (strain NEM316).